A 176-amino-acid chain; its full sequence is Large ribosomal subunit protein uL10 (176 aa).

This sequence belongs to the universal ribosomal protein uL10 family. Part of the ribosomal stalk of the 50S ribosomal subunit. The N-terminus interacts with L11 and the large rRNA to form the base of the stalk. The C-terminus forms an elongated spine to which L12 dimers bind in a sequential fashion forming a multimeric L10(L12)X complex.

Its function is as follows. Forms part of the ribosomal stalk, playing a central role in the interaction of the ribosome with GTP-bound translation factors. This chain is Large ribosomal subunit protein uL10, found in Hahella chejuensis (strain KCTC 2396).